The sequence spans 23 residues: Basic phospholipase A2 homolog CTs-K49c (23 aa).

Contains 7 disulfide bonds. In terms of tissue distribution, expressed by the venom gland.

Its subcellular location is the secreted. In terms of biological role, snake venom phospholipase A2 homolog that lacks catalytic activity. Shows myotoxic activities. Induces local edema a few hours after injection (5-10 ug) in the hind paw. This is Basic phospholipase A2 homolog CTs-K49c from Trimeresurus stejnegeri (Chinese green tree viper).